A 361-amino-acid polypeptide reads, in one-letter code: SUN domain-containing protein 3 (361 aa).

Over 1 to 47 (MSGKAKARRAAMFFRGCSEDASGSTSGSTLLSEDENPDTNGVTRSWK) the chain is Nuclear. A disordered region spans residues 19 to 38 (EDASGSTSGSTLLSEDENPD). The span at 22 to 31 (SGSTSGSTLL) shows a compositional bias: low complexity. A helical membrane pass occupies residues 48–69 (IILSTMFTLTFLLVGLLSHQWL). Residues 70–361 (KETEVPQKSR…RVHGTPGKHI (292 aa)) are Perinuclear space-facing. The stretch at 103–129 (KEQLELLKKESQTLENNFHKILLLIEQ) forms a coiled coil. An SUN domain is found at 197 to 358 (GASIIEAGTS…YRFRVHGTPG (162 aa)).

In terms of assembly, self-associates. Interacts with SYNE1 and SPAG4/SUN4. Proposed to form a spermatogenesis-specific LINC complex with SYNE1 during sperm head formation possibly implicating a SUN domain-based heterotrimer with SPAG4/SUN4 associating with SYNE1.

The protein resides in the membrane. Its subcellular location is the nucleus envelope. It is found in the nucleus inner membrane. As a probable component of the LINC (LInker of Nucleoskeleton and Cytoskeleton) complex, involved in the connection between the nuclear lamina and the cytoskeleton. The nucleocytoplasmic interactions established by the LINC complex play an important role in the transmission of mechanical forces across the nuclear envelope and in nuclear movement and positioning. May be involved in nuclear remodeling during sperm head formation in spermatogenesis. A probable SUN3:SYNE1 LINC complex may tether spermatid nuclei to posterior cytoskeletal structures such as the manchette. The protein is SUN domain-containing protein 3 (SUN3) of Macaca fascicularis (Crab-eating macaque).